A 1033-amino-acid polypeptide reads, in one-letter code: Isoleucine--tRNA ligase 2 (1033 aa).

The 'HIGH' region signature appears at 47-57; the sequence is PTANGLPHVGH. The short motif at 590-594 is the 'KMSKS' region element; that stretch reads KMSKS. Lysine 593 provides a ligand contact to ATP.

The protein belongs to the class-I aminoacyl-tRNA synthetase family. IleS type 2 subfamily. In terms of assembly, monomer. Requires Zn(2+) as cofactor.

It is found in the cytoplasm. It catalyses the reaction tRNA(Ile) + L-isoleucine + ATP = L-isoleucyl-tRNA(Ile) + AMP + diphosphate. Functionally, catalyzes the attachment of isoleucine to tRNA(Ile). As IleRS can inadvertently accommodate and process structurally similar amino acids such as valine, to avoid such errors it has two additional distinct tRNA(Ile)-dependent editing activities. One activity is designated as 'pretransfer' editing and involves the hydrolysis of activated Val-AMP. The other activity is designated 'posttransfer' editing and involves deacylation of mischarged Val-tRNA(Ile). In Bacillus cereus (strain ATCC 14579 / DSM 31 / CCUG 7414 / JCM 2152 / NBRC 15305 / NCIMB 9373 / NCTC 2599 / NRRL B-3711), this protein is Isoleucine--tRNA ligase 2.